The primary structure comprises 251 residues: Putative (5-formylfuran-3-yl)methyl phosphate synthase (251 aa).

Catalysis depends on Lys29, which acts as the Schiff-base intermediate with substrate. Catalysis depends on Lys87, which acts as the Proton acceptor.

The protein belongs to the MfnB family.

It carries out the reaction 2 D-glyceraldehyde 3-phosphate = 4-(hydroxymethyl)-2-furancarboxaldehyde phosphate + phosphate + 2 H2O. Functionally, catalyzes the formation of 4-(hydroxymethyl)-2-furancarboxaldehyde phosphate (4-HFC-P) from two molecules of glyceraldehyde-3-P (GA-3-P). This is Putative (5-formylfuran-3-yl)methyl phosphate synthase from Kitasatospora aureofaciens (Streptomyces aureofaciens).